The sequence spans 388 residues: Protein-glutamate methylesterase/protein-glutamine glutaminase 1 (388 aa).

Positions 4–121 (QVLVVDDSSF…ATNKDEAIRL (118 aa)) constitute a Response regulatory domain. 4-aspartylphosphate is present on aspartate 55. The segment at 149-190 (SARAGLSSTSPTLGSSTLGRSPASGLASSASRNSPTVSTPAS) is disordered. A compositionally biased stretch (low complexity) spans 153–169 (GLSSTSPTLGSSTLGRS). The span at 174-189 (LASSASRNSPTVSTPA) shows a compositional bias: polar residues. In terms of domain architecture, CheB-type methylesterase spans 188–388 (PASAIRASGK…EAILKESGRG (201 aa)). Residues serine 207, histidine 234, and aspartate 330 contribute to the active site.

It belongs to the CheB family. Phosphorylated by CheA. Phosphorylation of the N-terminal regulatory domain activates the methylesterase activity.

The protein resides in the cytoplasm. It catalyses the reaction [protein]-L-glutamate 5-O-methyl ester + H2O = L-glutamyl-[protein] + methanol + H(+). The catalysed reaction is L-glutaminyl-[protein] + H2O = L-glutamyl-[protein] + NH4(+). Functionally, involved in chemotaxis. Part of a chemotaxis signal transduction system that modulates chemotaxis in response to various stimuli. Catalyzes the demethylation of specific methylglutamate residues introduced into the chemoreceptors (methyl-accepting chemotaxis proteins or MCP) by CheR. Also mediates the irreversible deamidation of specific glutamine residues to glutamic acid. The protein is Protein-glutamate methylesterase/protein-glutamine glutaminase 1 of Shewanella denitrificans (strain OS217 / ATCC BAA-1090 / DSM 15013).